The chain runs to 148 residues: UPF0260 protein ESA_01462 (148 aa).

The protein belongs to the UPF0260 family.

The sequence is that of UPF0260 protein ESA_01462 from Cronobacter sakazakii (strain ATCC BAA-894) (Enterobacter sakazakii).